The following is a 264-amino-acid chain: Tritrans,polycis-undecaprenyl-diphosphate synthase (geranylgeranyl-diphosphate specific) (264 aa).

The active site involves Asp-43. Residue Asp-43 participates in Mg(2+) binding. Substrate contacts are provided by residues Gly-44–Arg-47, Trp-48, His-60, and Ser-88–Glu-90. Asn-91 acts as the Proton acceptor in catalysis. Substrate-binding positions include Phe-92, Arg-94, Arg-213, and Arg-219–Ser-221. Mg(2+) is bound at residue Glu-232.

This sequence belongs to the UPP synthase family. As to quaternary structure, homodimer. Requires Mg(2+) as cofactor.

The enzyme catalyses geranylgeranyl diphosphate + 7 isopentenyl diphosphate = tri-trans,hepta-cis-undecaprenyl diphosphate + 7 diphosphate. Its function is as follows. Catalyzes the sequential condensation of isopentenyl diphosphate (IPP) with geranylgeranyl diphosphate (GGPP) to yield (2Z,6Z,10Z,14Z,18Z,22Z,26Z,30E,34E,38E)-undecaprenyl diphosphate (tritrans,heptacis-UPP). It is probably the precursor of glycosyl carrier lipids. This is Tritrans,polycis-undecaprenyl-diphosphate synthase (geranylgeranyl-diphosphate specific) from Pyrococcus abyssi (strain GE5 / Orsay).